The following is a 355-amino-acid chain: Protein FIP1 (355 aa).

The next 4 helical transmembrane spans lie at 42-62, 72-92, 113-133, and 149-169; these read YLYM…PWMF, LLCC…QYFV, VVRL…LVIV, and IIML…IGYV. A coiled-coil region spans residues 220–337; sequence LHFLSEEILC…RMSNSELQKE (118 aa). Residues 331–340 are compositionally biased toward basic and acidic residues; that stretch reads NSELQKEVAS. The disordered stretch occupies residues 331-355; that stretch reads NSELQKEVASTRRKQMLETTTSEQP.

This sequence belongs to the TMEM192 family. In terms of assembly, interacts with FRI.

It localises to the membrane. In Arabidopsis thaliana (Mouse-ear cress), this protein is Protein FIP1.